A 795-amino-acid chain; its full sequence is RAS guanyl-releasing protein 1 (795 aa).

Over residues 1–12 the composition is skewed to basic and acidic residues; it reads MGTLGKAREAPR. Positions 1–37 are disordered; it reads MGTLGKAREAPRKPCHGSRAGPKARLEAKSTNSPLPA. In terms of domain architecture, N-terminal Ras-GEF spans 53-176; that stretch reads LGHLAKGASL…HLIDTTQINS (124 aa). The tract at residues 57–110 is ras exchanger motif region; required for transforming activity; it reads AKGASLDDLIDSCIQSFDADGNLCRNNQLLQVMLTMHRIIISSAELLQKVMNLY. Residue T184 is modified to Phosphothreonine; by PKC. The 232-residue stretch at 205-436 folds into the Ras-GEF domain; that stretch reads EPEELSEHLT…YELSYAREPR (232 aa). EF-hand domains lie at 470–505 and 506–532; these read HVQRMVDSVFKNYDLDQDGYISQEEFEKIAASFPFS and FCVMDKDREGLISRDEITAYFMRASSI. Ca(2+) is bound by residues D483, D485, D487, Y489, and E494. The Phorbol-ester/DAG-type zinc-finger motif lies at 541–591; the sequence is PHNFQETTYLKPTFCDNCAGFLWGVIKQGYRCKDCGMNCHKQCKDLVVFEC. A Phosphoserine modification is found at S597. The segment at 686-694 is suppress the PT region-mediated translocation to plasma membrane; sequence TPGHFVLSS. A PT region; mediates the BCR-dependent translocation to plasma membrane region spans residues 717–795; the sequence is LVRKRAFVKW…LAQMDHGDSA (79 aa). Residues 738-779 are a coiled coil; it reads ELHLRLRTYQELEQEINTLKADNDALKIQLKYAQKKIESLQL.

The protein belongs to the RASGRP family. Homodimer. Forms a signaling complex with DGKZ and HRAS. Interacts with F-actin. Interacts with SKAP1. Detected in spleen and thymus. Expressed by mature thymocytes and to a lower extent by bone marrow-derived mast cells (at protein level). Detected in B-cells and keratinocytes (at protein level).

It localises to the cytoplasm. Its subcellular location is the cytosol. It is found in the cell membrane. The protein localises to the golgi apparatus membrane. The protein resides in the endoplasmic reticulum membrane. With respect to regulation, autoinhibited. Activated by diacylglycerol and calcium binding, which induces a conformational change releasing the autoinhibitory state. Regulated by DGKA. Regulated by DGKZ. Regulated by PLC gamma and F-actin polymerization. Functions as a calcium- and diacylglycerol (DAG)-regulated nucleotide exchange factor specifically activating Ras through the exchange of bound GDP for GTP. Activates the Erk/MAP kinase cascade. Regulates T-cell/B-cell development, homeostasis and differentiation by coupling T-lymphocyte/B-lymphocyte antigen receptors to Ras. Regulates NK cell cytotoxicity and ITAM-dependent cytokine production by activation of Ras-mediated ERK and JNK pathways. Functions in mast cell degranulation and cytokine secretion, regulating FcERI-evoked allergic responses. May also function in differentiation of other cell types. Proto-oncogene, which promotes T-cell lymphomagenesis when its expression is deregulated. In Mus musculus (Mouse), this protein is RAS guanyl-releasing protein 1 (Rasgrp1).